A 175-amino-acid polypeptide reads, in one-letter code: NAD(P)H-quinone oxidoreductase subunit J (175 aa).

Belongs to the complex I 30 kDa subunit family. NDH-1 can be composed of about 15 different subunits; different subcomplexes with different compositions have been identified which probably have different functions.

The protein localises to the cellular thylakoid membrane. It catalyses the reaction a plastoquinone + NADH + (n+1) H(+)(in) = a plastoquinol + NAD(+) + n H(+)(out). The enzyme catalyses a plastoquinone + NADPH + (n+1) H(+)(in) = a plastoquinol + NADP(+) + n H(+)(out). In terms of biological role, NDH-1 shuttles electrons from an unknown electron donor, via FMN and iron-sulfur (Fe-S) centers, to quinones in the respiratory and/or the photosynthetic chain. The immediate electron acceptor for the enzyme in this species is believed to be plastoquinone. Couples the redox reaction to proton translocation, and thus conserves the redox energy in a proton gradient. Cyanobacterial NDH-1 also plays a role in inorganic carbon-concentration. The polypeptide is NAD(P)H-quinone oxidoreductase subunit J (Trichormus variabilis (strain ATCC 29413 / PCC 7937) (Anabaena variabilis)).